The following is a 269-amino-acid chain: Malonyl-[acyl-carrier protein] O-methyltransferase (269 aa).

It belongs to the methyltransferase superfamily.

The enzyme catalyses malonyl-[ACP] + S-adenosyl-L-methionine = malonyl-[ACP] methyl ester + S-adenosyl-L-homocysteine. It participates in cofactor biosynthesis; biotin biosynthesis. Converts the free carboxyl group of a malonyl-thioester to its methyl ester by transfer of a methyl group from S-adenosyl-L-methionine (SAM). It allows to synthesize pimeloyl-ACP via the fatty acid synthetic pathway. The sequence is that of Malonyl-[acyl-carrier protein] O-methyltransferase from Bacillus cereus (strain ATCC 14579 / DSM 31 / CCUG 7414 / JCM 2152 / NBRC 15305 / NCIMB 9373 / NCTC 2599 / NRRL B-3711).